A 155-amino-acid chain; its full sequence is Plastocyanin, chloroplastic (155 aa).

The N-terminal 58 residues, 1-58, are a transit peptide targeting the chloroplast; sequence MAALSSAAVSVPSFAAATPMRSSRSSRMVVRASLGKKAASAAVAMAAGAMLLGGSAMA. The Plastocyanin-like domain occupies 59–155; it reads QDVLLGANGG…AGMVGKVTVN (97 aa). Residues His-95, Cys-140, His-143, and Met-148 each coordinate Cu cation.

Belongs to the plastocyanin family. It depends on Cu(2+) as a cofactor.

It is found in the plastid. The protein resides in the chloroplast thylakoid membrane. Participates in electron transfer between P700 and the cytochrome b6-f complex in photosystem I. This is Plastocyanin, chloroplastic (PETE) from Hordeum vulgare (Barley).